An 842-amino-acid polypeptide reads, in one-letter code: Probable vinculin (842 aa).

The stretch at 585–679 (KEARKRLDDV…AAEEEERKRA (95 aa)) forms a coiled coil.

Belongs to the vinculin/alpha-catenin family. As to quaternary structure, monomer. Associates with F-actin. Interacts with aarA, ctxA, ctxB and rgaA. Epithelium.

It localises to the cytoplasm. Its subcellular location is the cell cortex. The protein localises to the cell junction. Involved in cell adhesion. Thought to play an important role in cytokinesis B, probably by providing substrate adhesion and traction forces. Required to organize and polarize the tip epithelium during cytokinesis. Required for the normal distribution of myosin in the tip epithelium. Involved in the localization of ctxA, ctxB, dcsA, exoc6 and rgaA. Thought to form a complex with ctxA, ctxB, and rgaA which regulates myosin accumulation to the apical plasma membrane. The chain is Probable vinculin (ctnnA) from Dictyostelium discoideum (Social amoeba).